The chain runs to 294 residues: Nucleotide-binding protein Daud_0300 (294 aa).

11–18 (GLSGAGKT) contacts ATP. 62 to 65 (DIRG) provides a ligand contact to GTP.

Belongs to the RapZ-like family.

In terms of biological role, displays ATPase and GTPase activities. This is Nucleotide-binding protein Daud_0300 from Desulforudis audaxviator (strain MP104C).